Here is a 646-residue protein sequence, read N- to C-terminus: MSSRKQARLEAKQFIDTLSVQPYPNSTKVYIEGSRPDIRVPMREISLADSLIGGTKEAPIFEPNEPVRVYDTSGVYTDPDYAIDLYSGLPKLREGWIEERNDTEILEDVSSVYAKERLDDETLDDLRYGNLPRIRRAKAGKCVTQLHYARKGIVTPEMEYIALRENMGRAQYRDDVLTQQHPGQSFGANLPKDITAEFVRKEVAEGRAIIPSNINHPESEPMIIGRNFLVKVNANIGNSSVTSSIEEEVEKLVWATRWGGDTVMDLSTGRNIHETREWILRNSPVPIGTVPMYQALEKVNGIAENLNWEVMRDTLIEQAEQGVDYFTIHAGLLLRYVPMTAKRVTGIVSRGGSIIAKWCLAHHQESFLYTHFREICEICAKYDVALSLGDGLRPGSVADANDEAQFAELRTLGELTKIAWEYDVQVIIEGPGHIPMHMIKENMDQQLEHCHEAPFYTLGPLTTDIAPGYDHITSGIGAAMIGWYGCAMLCYVTPKEHLGLPNKEDVKTGMITYKLAAHAADLAKGHPGAQVRDNALSKARFEFRWEDQFNLALDPDTARAFHDETLPQESGKVAHFCSMCGPKFCSMKISQEVREYAKDTEQVAADQAISIKMLDDPLEGMRKKSEEFRATGSELYHPAVHAEADE.

Substrate-binding positions include Asn-235, Met-264, Tyr-293, His-329, 349 to 351 (SRG), 390 to 393 (DGLR), and Glu-429. His-433 is a Zn(2+) binding site. Tyr-456 is a binding site for substrate. Position 497 (His-497) interacts with Zn(2+). Cys-577, Cys-580, and Cys-585 together coordinate [4Fe-4S] cluster. Residues 624 to 646 (KSEEFRATGSELYHPAVHAEADE) are disordered.

This sequence belongs to the ThiC family. As to quaternary structure, homodimer. The cofactor is [4Fe-4S] cluster.

It catalyses the reaction 5-amino-1-(5-phospho-beta-D-ribosyl)imidazole + S-adenosyl-L-methionine = 4-amino-2-methyl-5-(phosphooxymethyl)pyrimidine + CO + 5'-deoxyadenosine + formate + L-methionine + 3 H(+). It participates in cofactor biosynthesis; thiamine diphosphate biosynthesis. In terms of biological role, catalyzes the synthesis of the hydroxymethylpyrimidine phosphate (HMP-P) moiety of thiamine from aminoimidazole ribotide (AIR) in a radical S-adenosyl-L-methionine (SAM)-dependent reaction. This chain is Phosphomethylpyrimidine synthase, found in Vibrio parahaemolyticus serotype O3:K6 (strain RIMD 2210633).